Consider the following 319-residue polypeptide: MAHINCTQATEFILVGLTDHQELKMPLFVLFLSIYLFTVVGNLGLILLIRADTSLNTPMYFFLSNLAFVDFCYSSVITPKMLGNFLYKQNVISFDACATQLGCFLTFMVSESLLLASMAYDRYVAICNPLLYMVVMTPGICIQLVAVPYSYSFLMALFHTILTFRLSYCHSNIVNHFYCDDMPLLRLTCSDTRFKQLWILACAGITFICSVLIVFVSYMFIIFAILRMSSAEGRRKAFSTCSSHMLAVTIFYGTLIFMYLQPSSSHSLDADKMASVFYTVIIPMLNPLIYSLRNKDVKDALKKVIINRNHAFIFLKLRK.

Residues 1-28 (MAHINCTQATEFILVGLTDHQELKMPLF) lie on the Extracellular side of the membrane. N-linked (GlcNAc...) asparagine glycosylation occurs at Asn5. A helical membrane pass occupies residues 29–49 (VLFLSIYLFTVVGNLGLILLI). Over 50–56 (RADTSLN) the chain is Cytoplasmic. The chain crosses the membrane as a helical span at residues 57 to 77 (TPMYFFLSNLAFVDFCYSSVI). Residues 78 to 97 (TPKMLGNFLYKQNVISFDAC) are Extracellular-facing. Cys97 and Cys179 are disulfide-bonded. The helical transmembrane segment at 98–118 (ATQLGCFLTFMVSESLLLASM) threads the bilayer. Residues 119–122 (AYDR) are Cytoplasmic-facing. The helical transmembrane segment at 123-143 (YVAICNPLLYMVVMTPGICIQ) threads the bilayer. At 144–204 (LVAVPYSYSF…KQLWILACAG (61 aa)) the chain is on the extracellular side. A helical transmembrane segment spans residues 205 to 225 (ITFICSVLIVFVSYMFIIFAI). Residues 226–239 (LRMSSAEGRRKAFS) are Cytoplasmic-facing. The helical transmembrane segment at 240–260 (TCSSHMLAVTIFYGTLIFMYL) threads the bilayer. Over 261–271 (QPSSSHSLDAD) the chain is Extracellular. A helical transmembrane segment spans residues 272–292 (KMASVFYTVIIPMLNPLIYSL). Residues 293 to 319 (RNKDVKDALKKVIINRNHAFIFLKLRK) lie on the Cytoplasmic side of the membrane.

The protein belongs to the G-protein coupled receptor 1 family.

It is found in the cell membrane. Odorant receptor. This Homo sapiens (Human) protein is Olfactory receptor 8U8 (OR8U8).